Consider the following 358-residue polypeptide: Gentisate 1,2-dioxygenase (358 aa).

A Cupin type-2 domain is found at 99-165 (QYLGPREVAP…VTDEPMAWLD (67 aa)). Residues 185 to 215 (DELSTRETPERSRGERLWGHPGLRPIGRPDQ) form a disordered region. The span at 187–202 (LSTRETPERSRGERLW) shows a compositional bias: basic and acidic residues.

This sequence belongs to the gentisate 1,2-dioxygenase family.

The enzyme catalyses 2,5-dihydroxybenzoate + O2 = 3-maleylpyruvate + H(+). Its function is as follows. Involved in the degradation of salicylate via a pathway involving coenzyme A derivative. Catalyzes the oxygen-dependent ring fission of gentisate between the carboxyl and proximal hydroxyl groups at positions 1 and 2 of the aromatic ring to form maleylpyruvate. The substrate specificity is strong, since salicylate, catechol, protocatechuic acid, homogenetisate, 2,3-dihydroxybenzoate or 5-aminosalicylate cannot substitute for gentisate in the ring cleavage reaction. This is Gentisate 1,2-dioxygenase from Streptomyces sp.